A 491-amino-acid chain; its full sequence is Probable cytosol aminopeptidase (491 aa).

Lys263 and Asp268 together coordinate Mn(2+). The active site involves Lys275. Mn(2+) contacts are provided by Asp286, Asp345, and Glu347. The active site involves Arg349.

It belongs to the peptidase M17 family. Requires Mn(2+) as cofactor.

Its subcellular location is the cytoplasm. It carries out the reaction Release of an N-terminal amino acid, Xaa-|-Yaa-, in which Xaa is preferably Leu, but may be other amino acids including Pro although not Arg or Lys, and Yaa may be Pro. Amino acid amides and methyl esters are also readily hydrolyzed, but rates on arylamides are exceedingly low.. The catalysed reaction is Release of an N-terminal amino acid, preferentially leucine, but not glutamic or aspartic acids.. Its function is as follows. Presumably involved in the processing and regular turnover of intracellular proteins. Catalyzes the removal of unsubstituted N-terminal amino acids from various peptides. In Haemophilus influenzae (strain PittGG), this protein is Probable cytosol aminopeptidase.